The primary structure comprises 938 residues: Translation initiation factor IF-2 (938 aa).

Over residues 57 to 205 (DKSKKVASKE…PKSEETKSEE (149 aa)) the composition is skewed to basic and acidic residues. Residues 57–350 (DKSKKVASKE…RSADDLAQQE (294 aa)) form a disordered region. Residues 206-215 (TTEGGESEEK) show a composition bias toward acidic residues. Basic and acidic residues predominate over residues 248-259 (KKEEKKEDDKKD). Composition is skewed to basic residues over residues 260–270 (KDRRKKRRRRI) and 285–296 (GAKKGGRTRSKP). Residues 297 to 319 (ITKEEPTEEEVQKQVRETLEKLQ) are compositionally biased toward basic and acidic residues. Over residues 323–333 (SKGKGAKYRRQ) the composition is skewed to basic residues. Residues 334–344 (KRDEHRQRSAD) are compositionally biased toward basic and acidic residues. Residues 434 to 602 (TRAPIVTVMG…KVLLEAEILE (169 aa)) enclose the tr-type G domain. The tract at residues 443 to 450 (GHVDHGKT) is G1. 443 to 450 (GHVDHGKT) contacts GTP. A G2 region spans residues 468–472 (GITQH). The interval 490–493 (DTPG) is G3. GTP-binding positions include 490–494 (DTPGH) and 544–547 (NKSD). Residues 544 to 547 (NKSD) form a G4 region. A G5 region spans residues 580–582 (SAK).

Belongs to the TRAFAC class translation factor GTPase superfamily. Classic translation factor GTPase family. IF-2 subfamily.

Its subcellular location is the cytoplasm. In terms of biological role, one of the essential components for the initiation of protein synthesis. Protects formylmethionyl-tRNA from spontaneous hydrolysis and promotes its binding to the 30S ribosomal subunits. Also involved in the hydrolysis of GTP during the formation of the 70S ribosomal complex. This is Translation initiation factor IF-2 from Christiangramia forsetii (strain DSM 17595 / CGMCC 1.15422 / KT0803) (Gramella forsetii).